We begin with the raw amino-acid sequence, 397 residues long: Argininosuccinate synthase (397 aa).

Position 9 to 17 (9 to 17 (AYSGGLDTS)) interacts with ATP. Tyr-87 is an L-citrulline binding site. ATP is bound at residue Gly-117. Thr-119, Asn-123, and Asp-124 together coordinate L-aspartate. Asn-123 lines the L-citrulline pocket. 5 residues coordinate L-citrulline: Arg-127, Ser-175, Ser-184, Glu-257, and Tyr-269.

It belongs to the argininosuccinate synthase family. Type 1 subfamily. As to quaternary structure, homotetramer.

It is found in the cytoplasm. It carries out the reaction L-citrulline + L-aspartate + ATP = 2-(N(omega)-L-arginino)succinate + AMP + diphosphate + H(+). Its pathway is amino-acid biosynthesis; L-arginine biosynthesis; L-arginine from L-ornithine and carbamoyl phosphate: step 2/3. This is Argininosuccinate synthase from Dictyoglomus turgidum (strain DSM 6724 / Z-1310).